We begin with the raw amino-acid sequence, 488 residues long: Zinc finger protein 92 (488 aa).

Residues valine 14–serine 85 form the KRAB domain. C2H2-type zinc fingers lie at residues tyrosine 141–histidine 163, tyrosine 169–histidine 191, tyrosine 197–histidine 219, phenylalanine 225–histidine 247, phenylalanine 253–histidine 275, and tyrosine 281–histidine 303. Residues phenylalanine 309 to histidine 331 form a C2H2-type 7; degenerate zinc finger. The C2H2-type 8 zinc finger occupies tyrosine 337 to histidine 359. The disordered stretch occupies residues glutamine 387–lysine 408. Residues glutamine 410–histidine 432 form a C2H2-type 9 zinc finger. The interval glutamate 435 to proline 488 is disordered.

It belongs to the krueppel C2H2-type zinc-finger protein family. Highly expressed in pancreatic islets.

The protein localises to the nucleus. KRAB domain-containing zinc-finger protein that represses B1/Alu SINE transposable elements and modulates the transcription of nearby genes in a tissue-specific manner. It regulates glucose homeostasis and lipid metabolism by modulating the expression of the endocrine cell-defining transcription factor, MAFB, in pancreatic islets and, the fat metabolism regulator, ACACB, in adipose tissue and muscle. This chain is Zinc finger protein 92 (Zfp92), found in Mus musculus (Mouse).